Here is a 401-residue protein sequence, read N- to C-terminus: Arylacetamide deacetylase-like 2 (401 aa).

A signal peptide spans 1–18; that stretch reads MGLKALCLGLLCVLFVSH. The short motif at 111–113 is the Involved in the stabilization of the negatively charged intermediate by the formation of the oxyanion hole element; the sequence is HGG. The cysteines at positions 116 and 338 are disulfide-linked. Catalysis depends on residues serine 189, aspartate 341, and histidine 371.

This sequence belongs to the 'GDXG' lipolytic enzyme family.

It is found in the secreted. The sequence is that of Arylacetamide deacetylase-like 2 (AADACL2) from Homo sapiens (Human).